We begin with the raw amino-acid sequence, 388 residues long: Deoxyuridine 5'-triphosphate nucleotidohydrolase (388 aa).

The span at 77 to 88 (EEKYDKEQHPGE) shows a compositional bias: basic and acidic residues. Disordered stretches follow at residues 77-96 (EEKY…SPLP) and 336-388 (THTP…PRHP). The segment covering 351 to 363 (VDDDVDETEEDEK) has biased composition (acidic residues).

It belongs to the dUTPase family. Requires Mg(2+) as cofactor.

The catalysed reaction is dUTP + H2O = dUMP + diphosphate + H(+). It participates in pyrimidine metabolism; dUMP biosynthesis; dUMP from dCTP (dUTP route): step 2/2. Functionally, involved in nucleotide metabolism: produces dUMP, the immediate precursor of thymidine nucleotides and decreases the intracellular concentration of dUTP to avoid uracil incorporation into viral DNA. The protein is Deoxyuridine 5'-triphosphate nucleotidohydrolase of Homo sapiens (Human).